Reading from the N-terminus, the 259-residue chain is Probable ABC transporter permease protein RC0129 (259 aa).

5 consecutive transmembrane segments (helical) span residues 13-35 (TVKFAQSVGSFSLFSFAAVSSII), 49-69 (LFIGFHSLPVVAMTTFFSGAV), 148-168 (VITAIITMPCLVLIGDIIGVM), 195-215 (PIDVISGLVKAGVFGFIISII), and 237-257 (AVVNSSILILISNYLITELFF).

Belongs to the MlaE permease family.

It is found in the cell inner membrane. Functionally, could be part of an ABC transporter complex. The sequence is that of Probable ABC transporter permease protein RC0129 from Rickettsia conorii (strain ATCC VR-613 / Malish 7).